Here is a 176-residue protein sequence, read N- to C-terminus: Large ribosomal subunit protein eL6A (176 aa).

Serine 2 carries the post-translational modification N-acetylserine. Phosphoserine is present on serine 12. A Glycyl lysine isopeptide (Lys-Gly) (interchain with G-Cter in ubiquitin) cross-link involves residue lysine 128.

It belongs to the eukaryotic ribosomal protein eL6 family. As to quaternary structure, component of the large ribosomal subunit (LSU). Mature yeast ribosomes consist of a small (40S) and a large (60S) subunit. The 40S small subunit contains 1 molecule of ribosomal RNA (18S rRNA) and 33 different proteins (encoded by 57 genes). The large 60S subunit contains 3 rRNA molecules (25S, 5.8S and 5S rRNA) and 46 different proteins (encoded by 81 genes). N-terminally acetylated by acetyltransferase NatA.

It is found in the cytoplasm. In terms of biological role, component of the ribosome, a large ribonucleoprotein complex responsible for the synthesis of proteins in the cell. The small ribosomal subunit (SSU) binds messenger RNAs (mRNAs) and translates the encoded message by selecting cognate aminoacyl-transfer RNA (tRNA) molecules. The large subunit (LSU) contains the ribosomal catalytic site termed the peptidyl transferase center (PTC), which catalyzes the formation of peptide bonds, thereby polymerizing the amino acids delivered by tRNAs into a polypeptide chain. The nascent polypeptides leave the ribosome through a tunnel in the LSU and interact with protein factors that function in enzymatic processing, targeting, and the membrane insertion of nascent chains at the exit of the ribosomal tunnel. This Saccharomyces cerevisiae (strain ATCC 204508 / S288c) (Baker's yeast) protein is Large ribosomal subunit protein eL6A.